Consider the following 154-residue polypeptide: Probable chemoreceptor glutamine deamidase CheD (154 aa).

Belongs to the CheD family.

The catalysed reaction is L-glutaminyl-[protein] + H2O = L-glutamyl-[protein] + NH4(+). Its function is as follows. Probably deamidates glutamine residues to glutamate on methyl-accepting chemotaxis receptors (MCPs), playing an important role in chemotaxis. The polypeptide is Probable chemoreceptor glutamine deamidase CheD (Methanococcus vannielii (strain ATCC 35089 / DSM 1224 / JCM 13029 / OCM 148 / SB)).